We begin with the raw amino-acid sequence, 289 residues long: MYB transcription factor 69 (289 aa).

2 consecutive HTH myb-type domains span residues 9–61 (KAGV…TNYL) and 62–116 (RPGI…KKKL). DNA-binding regions (H-T-H motif) lie at residues 37–61 (WRAVPVSTGLMRCSKSCRLRWTNYL) and 89–112 (WAAIASYLPQRTDNDIKNYWNTHL). Disordered regions lie at residues 127 to 162 (APPRPSEPTAGHADCRRHDMTRSSKDSHAACPADST) and 225 to 252 (SSAIDIDPFDHKSGGAALPPPKKRQQQQ). Positions 139 to 154 (ADCRRHDMTRSSKDSH) are enriched in basic and acidic residues.

In terms of tissue distribution, mainly expressed in highly lignified tissues such as vascular tissues.

The protein localises to the nucleus. Its function is as follows. Transcription factor that binds to the promoter of MYB31 and MYB42 and activates directly their expression, thus repressing lignin biosynthesis. In Zea mays (Maize), this protein is MYB transcription factor 69.